The sequence spans 1076 residues: GPI inositol-deacylase A (1076 aa).

Residues 3 to 23 traverse the membrane as a helical segment; that stretch reads IATFPALAITALALVLWATVA. N-linked (GlcNAc...) asparagine glycosylation is found at Asn48 and Asn119. Residue Ser240 is part of the active site. Residue Asn404 is glycosylated (N-linked (GlcNAc...) asparagine). Transmembrane regions (helical) follow at residues 765–785 and 815–835; these read FLGF…LCLL and WILA…SLLY. Asn849 carries an N-linked (GlcNAc...) asparagine glycan. 3 consecutive transmembrane segments (helical) span residues 855–875, 877–897, and 910–930; these read FLGP…HWLL, ILTL…IAPE, and FLLL…VAVL. 2 N-linked (GlcNAc...) asparagine glycosylation sites follow: Asn952 and Asn966. Helical transmembrane passes span 970-990, 1006-1026, and 1035-1055; these read SLLL…VVWL, EVSA…GIMI, and IYAT…HGVV.

This sequence belongs to the GPI inositol-deacylase family.

It localises to the endoplasmic reticulum membrane. Involved in inositol deacylation of GPI-anchored proteins which plays important roles in the quality control and ER-associated degradation of GPI-anchored proteins. This Yarrowia lipolytica (strain CLIB 122 / E 150) (Yeast) protein is GPI inositol-deacylase A (BST1A).